The following is a 108-amino-acid chain: Glutaredoxin 4 (108 aa).

The 103-residue stretch at 5 to 107 (IKKIQNQIQN…KTISICDKLN (103 aa)) folds into the Glutaredoxin domain. Lysine 22 provides a ligand contact to glutathione. Cysteine 30 contacts [2Fe-2S] cluster. Glutathione is bound by residues arginine 59, phenylalanine 71, and 84-85 (CN).

The protein belongs to the glutaredoxin family. Monothiol subfamily. In terms of assembly, homodimer.

The protein resides in the cytoplasm. Monothiol glutaredoxin involved in the biogenesis of iron-sulfur clusters. The sequence is that of Glutaredoxin 4 (grxD) from Buchnera aphidicola subsp. Baizongia pistaciae (strain Bp).